Here is a 311-residue protein sequence, read N- to C-terminus: Homeobox protein Hox-B1a (311 aa).

Residues 217–276 (QNTIRTNFTTKQLTELEKEFHFSKYLTRARRVEIAATLELNETQVKIWFQNRRMKQKKRE) constitute a DNA-binding region (homeobox). Residues 267–311 (NRRMKQKKREKEGLAPASSTSSKDLEDQSDHSTSTSPEASPSPDS) are disordered. The segment covering 298 to 311 (STSTSPEASPSPDS) has biased composition (low complexity).

It belongs to the Antp homeobox family. Labial subfamily.

The protein localises to the nucleus. Sequence-specific transcription factor which is part of a developmental regulatory system that provides cells with specific positional identities on the anterior-posterior axis. The polypeptide is Homeobox protein Hox-B1a (hoxb1a) (Danio rerio (Zebrafish)).